The following is a 262-amino-acid chain: Putative hydro-lyase Mflv_5194 (262 aa).

The protein belongs to the D-glutamate cyclase family.

This Mycolicibacterium gilvum (strain PYR-GCK) (Mycobacterium gilvum (strain PYR-GCK)) protein is Putative hydro-lyase Mflv_5194.